Reading from the N-terminus, the 121-residue chain is Ribonuclease P protein component (121 aa).

This sequence belongs to the RnpA family. As to quaternary structure, consists of a catalytic RNA component (M1 or rnpB) and a protein subunit.

The enzyme catalyses Endonucleolytic cleavage of RNA, removing 5'-extranucleotides from tRNA precursor.. Its function is as follows. RNaseP catalyzes the removal of the 5'-leader sequence from pre-tRNA to produce the mature 5'-terminus. It can also cleave other RNA substrates such as 4.5S RNA. The protein component plays an auxiliary but essential role in vivo by binding to the 5'-leader sequence and broadening the substrate specificity of the ribozyme. This chain is Ribonuclease P protein component, found in Neisseria meningitidis serogroup A / serotype 4A (strain DSM 15465 / Z2491).